The sequence spans 220 residues: MTIIRTLFVYYSFLFILVLCSSKDTEVNNGEKVNIVAFGEGRCSDTSFWMKWHWLPMWRMLGSTGRINFEYHPYGIKTTCVDSDSGDDVVCECHHGARECLLNQLQACVIEALPNFEEYMEVVTCIQGKQNISMAAEACFNEPSKLERAKMMSCADSRHGRKLFSDHENFVAQMAPEMDWAPWILINGKRYKEAEEDLWQFLCDRFIDPRPIHCPKKIIY.

The first 22 residues, 1 to 22 (MTIIRTLFVYYSFLFILVLCSS), serve as a signal peptide directing secretion. N131 is a glycosylation site (N-linked (GlcNAc...) asparagine).

Belongs to the GILT family.

It localises to the secreted. In Caenorhabditis briggsae, this protein is GILT-like protein CBG03282.